The chain runs to 393 residues: ATP phosphoribosyltransferase regulatory subunit (393 aa).

This sequence belongs to the class-II aminoacyl-tRNA synthetase family. HisZ subfamily. Heteromultimer composed of HisG and HisZ subunits.

It is found in the cytoplasm. The protein operates within amino-acid biosynthesis; L-histidine biosynthesis; L-histidine from 5-phospho-alpha-D-ribose 1-diphosphate: step 1/9. In terms of biological role, required for the first step of histidine biosynthesis. May allow the feedback regulation of ATP phosphoribosyltransferase activity by histidine. The sequence is that of ATP phosphoribosyltransferase regulatory subunit from Marinobacter nauticus (strain ATCC 700491 / DSM 11845 / VT8) (Marinobacter aquaeolei).